We begin with the raw amino-acid sequence, 391 residues long: MAAVINTNYLSLVAQNNLNKSQSALGSAIERLSSGLRINSAKDDAAGQAIANRFTANVKGLTQAARNANDGISIAQTTEGALNEINNNLQRIRELTVQASNGTNSASDIDSIQQEVNQRLEEINRIAEQTDFNGIKVLKSNATDMTLSIQVGAKDNETIDIKIDRNSNWNLYDAVGTVPGGTVNGEARTVNALGFDVLSAVTTTIASDTVTFDAAVAAAEQAAGAAVGDGSVVSYGDTANPQYAVVVDNAGTMTSYALTFDKDGKAALGDQLGAVASQAAEAAVGTNDVAAGANVTVSGGAADALSKLDDAMKAVDEQRSSLGAIQNRFESTVANLNNTITNLSAARSRIEDSDYATEVSNMTKNQILQQAGTSVLAQANQVPQNVLSLLR.

The protein belongs to the bacterial flagellin family.

The protein resides in the secreted. It is found in the bacterial flagellum. Its function is as follows. Flagellin is the subunit protein which polymerizes to form the filaments of bacterial flagella. This Bordetella bronchiseptica (strain ATCC BAA-588 / NCTC 13252 / RB50) (Alcaligenes bronchisepticus) protein is Flagellin (flaA).